The sequence spans 581 residues: Proline--tRNA ligase (581 aa).

This sequence belongs to the class-II aminoacyl-tRNA synthetase family. ProS type 1 subfamily. In terms of assembly, homodimer.

It is found in the cytoplasm. The enzyme catalyses tRNA(Pro) + L-proline + ATP = L-prolyl-tRNA(Pro) + AMP + diphosphate. Its function is as follows. Catalyzes the attachment of proline to tRNA(Pro) in a two-step reaction: proline is first activated by ATP to form Pro-AMP and then transferred to the acceptor end of tRNA(Pro). As ProRS can inadvertently accommodate and process non-cognate amino acids such as alanine and cysteine, to avoid such errors it has two additional distinct editing activities against alanine. One activity is designated as 'pretransfer' editing and involves the tRNA(Pro)-independent hydrolysis of activated Ala-AMP. The other activity is designated 'posttransfer' editing and involves deacylation of mischarged Ala-tRNA(Pro). The misacylated Cys-tRNA(Pro) is not edited by ProRS. The sequence is that of Proline--tRNA ligase from Polaromonas naphthalenivorans (strain CJ2).